Reading from the N-terminus, the 269-residue chain is MNIGNMKATDVKAYISNILKSEDKSIDYEALIRTLEDDNRVTVKNLGKNVIKFLENRKKERIRVRNMYEFDKKYIKSGTYLAGADEVGRGPLAGPIVAAAVVLDLDIINDENLILRINDSKKISFEVREELSKIIKERAVSYSIQEISSEEIDEKGIAWCNNEVLKRSVCNLKVDPDLVLSDGYKIKNCTINNEFVVKGDAKSASIACASIIAKVYRDNLMIEYSKKYPEYMFNKNMGYGTKEHIEAIKKFGCTKIHRKSFLKNILNTF.

The RNase H type-2 domain maps to 79-269 (TYLAGADEVG…SFLKNILNTF (191 aa)). A divalent metal cation contacts are provided by aspartate 85, glutamate 86, and aspartate 182.

This sequence belongs to the RNase HII family. Mn(2+) is required as a cofactor. Requires Mg(2+) as cofactor.

Its subcellular location is the cytoplasm. The enzyme catalyses Endonucleolytic cleavage to 5'-phosphomonoester.. Its function is as follows. Endonuclease that specifically degrades the RNA of RNA-DNA hybrids. This Clostridium novyi (strain NT) protein is Ribonuclease HII.